Reading from the N-terminus, the 212-residue chain is NAD(P)H dehydrogenase (quinone) 3 (212 aa).

The region spanning 4-192 (MLVLYYSSYG…DGARFQGRHV (189 aa)) is the Flavodoxin-like domain. Residues 10-15 (SSYGHI) and 78-80 (TRF) each bind FMN. Tyrosine 12 is a binding site for NAD(+). Tryptophan 98 serves as a coordination point for substrate. Residues 113 to 119 (STGSQHG) and histidine 134 each bind FMN. Residues 161-182 (YGASTLAEDENHRDRSPSANEL) are disordered.

The protein belongs to the WrbA family. FMN is required as a cofactor.

It carries out the reaction a quinone + NADH + H(+) = a quinol + NAD(+). The catalysed reaction is a quinone + NADPH + H(+) = a quinol + NADP(+). In Rhizobium meliloti (strain 1021) (Ensifer meliloti), this protein is NAD(P)H dehydrogenase (quinone) 3.